Here is a 157-residue protein sequence, read N- to C-terminus: 3-hydroxyacyl-[acyl-carrier-protein] dehydratase FabZ (157 aa).

The active site involves H58.

Belongs to the thioester dehydratase family. FabZ subfamily.

The protein resides in the cytoplasm. It catalyses the reaction a (3R)-hydroxyacyl-[ACP] = a (2E)-enoyl-[ACP] + H2O. In terms of biological role, involved in unsaturated fatty acids biosynthesis. Catalyzes the dehydration of short chain beta-hydroxyacyl-ACPs and long chain saturated and unsaturated beta-hydroxyacyl-ACPs. The chain is 3-hydroxyacyl-[acyl-carrier-protein] dehydratase FabZ from Brucella abortus biovar 1 (strain 9-941).